We begin with the raw amino-acid sequence, 385 residues long: Alanine racemase (385 aa).

Catalysis depends on K40, which acts as the Proton acceptor; specific for D-alanine. K40 carries the N6-(pyridoxal phosphate)lysine modification. R139 contacts substrate. The active-site Proton acceptor; specific for L-alanine is the Y268. M315 serves as a coordination point for substrate.

The protein belongs to the alanine racemase family. It depends on pyridoxal 5'-phosphate as a cofactor.

It carries out the reaction L-alanine = D-alanine. It participates in amino-acid biosynthesis; D-alanine biosynthesis; D-alanine from L-alanine: step 1/1. Catalyzes the interconversion of L-alanine and D-alanine. May also act on other amino acids. The protein is Alanine racemase (alr) of Anoxybacillus flavithermus (strain DSM 21510 / WK1).